The following is a 282-amino-acid chain: Acyl-CoA-binding domain-containing protein 6 (282 aa).

Residues 1-12 (MASSFLPSGATT) show a composition bias toward polar residues. Residues 1–34 (MASSFLPSGATTGDSGGELSSGDDSGDVESLQSP) form a disordered region. Over residues 17–31 (GELSSGDDSGDVESL) the composition is skewed to low complexity. Serine 41 is subject to Phosphoserine. The 86-residue stretch at 42–127 (LPELFEKAAE…VKKLDPSWNP (86 aa)) folds into the ACB domain. An acyl-CoA is bound by residues 69–73 (YARYK) and lysine 95. At serine 106 the chain carries Phosphoserine. Tyrosine 114 contacts an acyl-CoA. 2 ANK repeats span residues 191–220 (EGRTLLHWACDRGHKELVTVLLQYRADINC) and 224–253 (EGQTALHYAAACEFLDIVELLLQSGADPTL).

As to quaternary structure, monomer.

It localises to the cytoplasm. Functionally, binds long-chain acyl-coenzyme A molecules with a strong preference for unsaturated C18:1-CoA, lower affinity for unsaturated C20:4-CoA, and very weak affinity for saturated C16:0-CoA. Does not bind fatty acids. The sequence is that of Acyl-CoA-binding domain-containing protein 6 (ACBD6) from Bos taurus (Bovine).